Reading from the N-terminus, the 147-residue chain is Large ribosomal subunit protein uL13 (147 aa).

The tract at residues 128 to 147 (DQHPHGAQQPQPFEITQVAQ) is disordered.

The protein belongs to the universal ribosomal protein uL13 family. In terms of assembly, part of the 50S ribosomal subunit.

This protein is one of the early assembly proteins of the 50S ribosomal subunit, although it is not seen to bind rRNA by itself. It is important during the early stages of 50S assembly. This is Large ribosomal subunit protein uL13 from Streptomyces coelicolor (strain ATCC BAA-471 / A3(2) / M145).